The chain runs to 290 residues: Probable porphobilinogen deaminase (290 aa).

Cysteine 230 is subject to S-(dipyrrolylmethanemethyl)cysteine.

It belongs to the HMBS family. Requires dipyrromethane as cofactor.

The enzyme catalyses 4 porphobilinogen + H2O = hydroxymethylbilane + 4 NH4(+). It functions in the pathway porphyrin-containing compound metabolism; protoporphyrin-IX biosynthesis; coproporphyrinogen-III from 5-aminolevulinate: step 2/4. Its function is as follows. Tetrapolymerization of the monopyrrole PBG into the hydroxymethylbilane pre-uroporphyrinogen in several discrete steps. The protein is Probable porphobilinogen deaminase of Metallosphaera sedula (strain ATCC 51363 / DSM 5348 / JCM 9185 / NBRC 15509 / TH2).